We begin with the raw amino-acid sequence, 171 residues long: Ribosome maturation factor RimM (171 aa).

The PRC barrel domain maps to Glu96–Met169.

It belongs to the RimM family. Binds ribosomal protein uS19.

The protein resides in the cytoplasm. In terms of biological role, an accessory protein needed during the final step in the assembly of 30S ribosomal subunit, possibly for assembly of the head region. Essential for efficient processing of 16S rRNA. May be needed both before and after RbfA during the maturation of 16S rRNA. It has affinity for free ribosomal 30S subunits but not for 70S ribosomes. In Clostridioides difficile (strain 630) (Peptoclostridium difficile), this protein is Ribosome maturation factor RimM.